An 805-amino-acid chain; its full sequence is Putative cation-transporting ATPase MJ1226 (805 aa).

A run of 4 helical transmembrane segments spans residues 53-73, 75-95, 226-246, and 258-278; these read SYFW…SAII, HWVD…VGFW, IGDY…AVEL, and FALV…LSIT. D311 serves as the catalytic 4-aspartylphosphate intermediate. 6 consecutive transmembrane segments (helical) span residues 615–637, 641–663, 680–700, 712–734, 747–769, and 773–790; these read YVIY…ILIL, PITA…AIAY, ILML…LIFY, ELQS…VTRI, LLFW…GIFM, and GWDL…WMLI.

It belongs to the cation transport ATPase (P-type) (TC 3.A.3) family. Type IIIA subfamily.

It localises to the cell membrane. It carries out the reaction ATP + H2O = ADP + phosphate + H(+). This chain is Putative cation-transporting ATPase MJ1226, found in Methanocaldococcus jannaschii (strain ATCC 43067 / DSM 2661 / JAL-1 / JCM 10045 / NBRC 100440) (Methanococcus jannaschii).